Here is a 161-residue protein sequence, read N- to C-terminus: GTP-dependent dephospho-CoA kinase (161 aa).

GTP-binding residues include Asp-40, Val-41, Val-42, Asp-59, Glu-112, and Glu-135.

It belongs to the GTP-dependent DPCK family.

The catalysed reaction is 3'-dephospho-CoA + GTP = GDP + CoA + H(+). It functions in the pathway cofactor biosynthesis; coenzyme A biosynthesis. Catalyzes the GTP-dependent phosphorylation of the 3'-hydroxyl group of dephosphocoenzyme A to form coenzyme A (CoA). The polypeptide is GTP-dependent dephospho-CoA kinase (Methanocorpusculum labreanum (strain ATCC 43576 / DSM 4855 / Z)).